We begin with the raw amino-acid sequence, 194 residues long: Calcium channel flower (194 aa).

At methionine 1–leucine 34 the chain is on the cytoplasmic side. A helical membrane pass occupies residues leucine 35 to isoleucine 55. Topologically, residues threonine 56–glycine 65 are extracellular. The chain crosses the membrane as a helical span at residues isoleucine 66–glycine 88. At glutamine 89–alanine 106 the chain is on the cytoplasmic side. The helical transmembrane segment at glycine 107 to phenylalanine 127 threads the bilayer. Residues glycine 128–valine 194 are Extracellular-facing. Important for promoting apoptosis stretches follow at residues threonine 135–alanine 157 and threonine 135–serine 192.

This sequence belongs to the calcium channel flower family. In terms of assembly, associates with the dally/ magu complex. Homomultimer. Associates with the dally/ magu complex. Detected in the imaginal wing disk (at protein level). In terms of tissue distribution, detected throughout the adult brain, including the optic lobe but, at much lower levels of expression than isoform Lose-A. As to expression, detected in the optic lobe (at protein level). Detected throughout the adult brain, including the optic lobe. Expressed in damaged and undamaged optic lobe neurons. Expressed in optic lobe neurons, with higher levels of expression in suboptimal neurons. Specifically expressed in injury-damaged optic lobe neurons.

Its subcellular location is the cell membrane. It is found in the cytoplasmic vesicle. The protein resides in the secretory vesicle. The protein localises to the synaptic vesicle membrane. It localises to the presynaptic cell membrane. Its subcellular location is the endosome. It is found in the synaptic vesicle. Channel activity is inhibited by La(3+), which reduces Ca(2+) influx and thus inhibits it's function in promoting activity-dependent bulk endocytosis (ADBE) in response to high stimuli. Transmembrane protein which mediates synaptic endocytosis, fitness-based cell culling, neuronal culling, morphogen gradient scaling, and calcium transport. Regulates synaptic endocytosis and hence couples exo- with endocytosis. Controls two major modes of synaptic vesicle (SV) endocytosis in the synaptic boutons of neuromuscular junctions (NMJs); Ca(2+) channel-independent Clathrin-mediated endocytosis (CME) in response to mild stimulation, and Ca(2+) channel-dependent activity-dependent bulk endocytosis (ADBE) in response to strong stimulation. Functions in ADBE and subsequent SV reformation from bulk endosomes by initiating Ca(2+) channel-dependent phosphatidylinositol 4,5-bisphosphate (PtdIns(4,5)P2) compartmentalization in synaptic boutons. There it acts at the periactive zone to provide the low Ca(2+) levels required to initiate Calcineurin activation and upregulate PtdIns(4,5)P2. Conversely PtdIns(4,5)P2 enhances fwe Ca(2+) channel-activity, establishing a positive feedback loop that induces PtdIns(4,5)P2 microdomain at the periactive zone. These microdomains trigger bulk membrane invagination (i.e. ADBE) by triggering actin polymerization while also promoting localization of fwe to bulk endosomes, thereby removing the ADBE trigger to reduce endocytosis and prevent excess membrane uptake. PtdIns(4,5)P2 then promotes SV reformation from the bulk endosomes, to coordinate ADBE and subsequent SV reformation. Different combinations of the flower isoforms at the cell membrane are also required for the identification and elimination of suboptimal or supernumerary cells during development, regeneration, and adulthood. Required for the recognition and elimination of unfit cells in the developing wing during cell competition. Also required for efficient identification and elimination of injured, damaged and/or dysfunctional neurons during regeneration of the adult brain. In the developing pupal retina, mediates the elimination of unwanted postmitotic neurons, including supernumerary photoreceptor neurons that form at the periphery of the retina and are contained within incomplete ommatidia units. Downstream of the flower fitness fingerprints, cells identified as unwanted or unfit are eliminated via apoptosis through the expression of ahuizotl (azot). However, the cells marked for elimination by the flower isoforms only undergo apoptosis if additional thresholds are met; (1) their neighboring fit/healthy cells express different levels of the fwe isoforms, and (2) the levels of the protective signal SPARC expressed by the loser or unwanted cells are unable to inhibit caspase activation. These additional thresholds for flower-mediated apoptosis, allows useful cells to recover from transient and limited stress before they are unnecessarily eliminated. Functions with dally and magu in a mechanism of scaling, which utilises apoptosis to ensure that the dpp morphogen gradient, which mediates organ growth, remains proportional to the size of the growing wing. In this mechanism, fwe represses dally- and Magu-dependent activity in expanding the gradient, and dally/Magu inhibits fwe-dependent apoptosis to keep cell death rate low. When the levels of these different proteins are optimally regulated the gradient correctly scales with organ growth but when this fails, fwe-mediated apoptosis is activated to trim the developing tissue to match the correct size of the gradient. Its function is as follows. Functions with the other flower isoforms to produce tissue-specific fitness fingerprints that identify unfit or fit cells during cell selection processes in order to maintain tissue health. In the wing imaginal disk, this isoform is highly expressed in healthy/normal cells but is down-regulated in cells with decreased fitness. During cell competition, if levels of this isoform in unfit cells is lower than in the surrounding neighboring cells, the suboptimal cells are recognized as 'loser' cells, and undergo elimination via apoptosis to be replaced by the surrounding healthy 'winner' cell population. Functionally, functions with the other flower isoforms to produce tissue-specific fitness fingerprints that identify unfit or fit cells during cell selection processes in order to maintain tissue health. In the wing imaginal disk, this isoform displays low levels of expression in healthy/normal cells but is up-regulated in cells with decreased fitness. During cell competition, if levels of this isoform in unfit cells is higher than in the surrounding neighboring cells, the suboptimal cells are recognized as 'loser' cells, and undergo elimination via apoptosis to be replaced by the surrounding healthy 'winner' cell population. In terms of biological role, functions with the other flower isoforms to produce tissue-specific fitness fingerprints that identify unfit cells for cell selection processes during development, regeneration, and to maintain tissue health. During cell competition in certain tissues, marks suboptimal or damaged cells as 'loser' cells. In cells of the wing imaginal disk and damaged or dysfunctional neurons in the adult optic lobe, this isoform displays low to no expression in healthy/normal cells but is up-regulated in cells with decreased fitness or damage-affected neurons. During cell competition, if levels of this isoform in unfit cells is higher than in the surrounding neighboring cells, the suboptimal cells are recognized as 'loser' cells, and undergo elimination via apoptosis to be replaced by the surrounding healthy/undamaged 'winner' cell population. In the developing pupal retina, also required for the recognition and elimination of postmitotic neurons, including supernumerary photoreceptor neurons that form at the periphery of the retina and are contained within incomplete ommatidia units. Activity at the peripheral retina is induced by the wg signaling pathway but, once activated, it promotes apoptosis of supernumerary photoreceptor neurons independently of wg signaling and snail function. The protein is Calcium channel flower (fwe) of Drosophila melanogaster (Fruit fly).